A 117-amino-acid chain; its full sequence is Large ribosomal subunit protein uL18 (117 aa).

Belongs to the universal ribosomal protein uL18 family. Part of the 50S ribosomal subunit; part of the 5S rRNA/L5/L18/L25 subcomplex. Contacts the 5S and 23S rRNAs.

In terms of biological role, this is one of the proteins that bind and probably mediate the attachment of the 5S RNA into the large ribosomal subunit, where it forms part of the central protuberance. The sequence is that of Large ribosomal subunit protein uL18 from Vibrio vulnificus (strain CMCP6).